A 370-amino-acid polypeptide reads, in one-letter code: Protein SUPPRESSOR OF NIM1 1 (370 aa).

Residues 1–43 (MALPWELEEDILSRLPPISLVRFRTVSKHWNSLFNDKTFINNH) enclose the F-box domain.

In terms of tissue distribution, ubiquitous, at low levels.

Functionally, negatively regulates a plant defense signaling pathway which is independent of salicylic acid (SA) and systemic acquired resistance (SAR). Confers sensitivity to P.syringae and P.parasitica. This is Protein SUPPRESSOR OF NIM1 1 (SON1) from Arabidopsis thaliana (Mouse-ear cress).